Reading from the N-terminus, the 275-residue chain is MHAVQRQIAEQLKVQPPFADQNALQAEVARRVGFIKDCLQNARLKTLVLGISGGVDSLTAGLLAQRAVKELRESTGDTRYRFIAVRLPYVVQADEHEAQASVDFIEPDERHTINIGSSVKALAAEVKAFDGLPASSVDFVLGNTKARMRMVAQYTVAGAYQGLVIGTDHAAEAVMGFFTKFGDGACDLAPLSGLVKNQVRAIARHFGAPESLVEKVPTADLEDLSPGKPDEASHGVTYAEIDAFLHGEPVREEAFRIICETYAKTQHKRELPYAP.

50 to 57 serves as a coordination point for ATP; the sequence is GISGGVDS. Mg(2+) is bound at residue D56. R147 contributes to the deamido-NAD(+) binding site. Position 167 (T167) interacts with ATP. Residue E172 participates in Mg(2+) binding. K180 and D187 together coordinate deamido-NAD(+). K196 and T218 together coordinate ATP. Residue 267–268 participates in deamido-NAD(+) binding; that stretch reads HK.

Belongs to the NAD synthetase family. In terms of assembly, homodimer.

It carries out the reaction deamido-NAD(+) + NH4(+) + ATP = AMP + diphosphate + NAD(+) + H(+). The protein operates within cofactor biosynthesis; NAD(+) biosynthesis; NAD(+) from deamido-NAD(+) (ammonia route): step 1/1. In terms of biological role, catalyzes the ATP-dependent amidation of deamido-NAD to form NAD. Uses ammonia as a nitrogen source. This chain is NH(3)-dependent NAD(+) synthetase, found in Pseudomonas syringae pv. tomato (strain ATCC BAA-871 / DC3000).